The chain runs to 93 residues: Bombyxin B-11 (93 aa).

The signal sequence occupies residues M1–E22. Disulfide bonds link C30-C75, C42-C92, and C74-C79. Residues G49 to S64 constitute a propeptide, bombyxin B-11 C peptide.

It belongs to the insulin family. Heterodimer of a B chain and an A chain linked by two disulfide bonds.

The protein localises to the secreted. In terms of biological role, brain peptide responsible for activation of prothoracic glands to produce ecdysone in insects. This is Bombyxin B-11 (BBXB11) from Bombyx mori (Silk moth).